The following is a 315-amino-acid chain: Ribosomal protein L11 methyltransferase (315 aa).

4 residues coordinate S-adenosyl-L-methionine: T164, G185, D207, and N249.

It belongs to the methyltransferase superfamily. PrmA family.

It is found in the cytoplasm. It catalyses the reaction L-lysyl-[protein] + 3 S-adenosyl-L-methionine = N(6),N(6),N(6)-trimethyl-L-lysyl-[protein] + 3 S-adenosyl-L-homocysteine + 3 H(+). Its function is as follows. Methylates ribosomal protein L11. In Lactobacillus gasseri (strain ATCC 33323 / DSM 20243 / BCRC 14619 / CIP 102991 / JCM 1131 / KCTC 3163 / NCIMB 11718 / NCTC 13722 / AM63), this protein is Ribosomal protein L11 methyltransferase.